The primary structure comprises 113 residues: Flagellar hook-basal body complex protein FliE (113 aa).

Belongs to the FliE family.

The protein localises to the bacterial flagellum basal body. The polypeptide is Flagellar hook-basal body complex protein FliE (Rhizobium leguminosarum bv. trifolii (strain WSM2304)).